The primary structure comprises 168 residues: Mitochondrial import inner membrane translocase subunit TIM14 (168 aa).

Polar residues predominate over residues 1–12 (MSSQSNTGNSIE). The tract at residues 1 to 29 (MSSQSNTGNSIEAPQLPIPGQTNGSANVT) is disordered. Residues 1-65 (MSSQSNTGNS…QALNYMGEHP (65 aa)) are Mitochondrial intermembrane-facing. The chain crosses the membrane as a helical span at residues 66 to 83 (VITGFGAFLTLYFTAGAY). Residues 84-168 (KSISKGLNGG…DFLEKRGISK (85 aa)) are Mitochondrial matrix-facing. The J domain maps to 112–168 (EALQILNLTENTLTKKKLKEVHRKIMLANHPDKGGSPFLATKINEAKDFLEKRGISK).

Belongs to the TIM14 family. Homodimer and heterodimer with PAM16/TIM16. Homodimerization may not be relevant in vivo, while heterodimerization is essential for activity regulation of mtHSP70. Component of the PAM complex, at least composed of mtHsp70, MGE1, TIM44, PAM16, PAM17 and PAM18/TIM14. Interacts directly with mtHsp70. Interacts directly with TIM17 subunit of the TIM23 complex.

Its subcellular location is the mitochondrion inner membrane. Essential component of the PAM complex, a complex required for the translocation of transit peptide-containing proteins from the inner membrane into the mitochondrial matrix in an ATP-dependent manner. In the complex, it is required to stimulate activity of mtHSP70 (SSC1). The polypeptide is Mitochondrial import inner membrane translocase subunit TIM14 (PAM18) (Saccharomyces cerevisiae (strain ATCC 204508 / S288c) (Baker's yeast)).